A 129-amino-acid polypeptide reads, in one-letter code: Fluoride-specific ion channel FluC 2 (129 aa).

Helical transmembrane passes span 3-23, 32-52, 59-79, and 90-110; these read FLYV…MNLW, ATLA…PFLA, LVLL…FSAF, and GEVV…LVMV. The Na(+) site is built by Gly-71 and Thr-74.

Belongs to the fluoride channel Fluc/FEX (TC 1.A.43) family.

The protein resides in the cell membrane. The catalysed reaction is fluoride(in) = fluoride(out). Na(+) is not transported, but it plays an essential structural role and its presence is essential for fluoride channel function. Its function is as follows. Fluoride-specific ion channel. Important for reducing fluoride concentration in the cell, thus reducing its toxicity. The chain is Fluoride-specific ion channel FluC 2 from Listeria innocua serovar 6a (strain ATCC BAA-680 / CLIP 11262).